Here is a 150-residue protein sequence, read N- to C-terminus: uncharacterized protein (150 aa).

This is an uncharacterized protein from Azospirillum brasilense.